The primary structure comprises 427 residues: Dihydroorotase (427 aa).

Histidine 60 and histidine 62 together coordinate Zn(2+). Residues 62–64 (HFR) and asparagine 94 each bind substrate. Zn(2+)-binding residues include aspartate 152, histidine 179, and histidine 232. Residue asparagine 278 coordinates substrate. Aspartate 305 serves as a coordination point for Zn(2+). Residue aspartate 305 is part of the active site. Substrate is bound by residues histidine 309 and 323–324 (FG).

The protein belongs to the metallo-dependent hydrolases superfamily. DHOase family. Class I DHOase subfamily. Zn(2+) serves as cofactor.

It catalyses the reaction (S)-dihydroorotate + H2O = N-carbamoyl-L-aspartate + H(+). It functions in the pathway pyrimidine metabolism; UMP biosynthesis via de novo pathway; (S)-dihydroorotate from bicarbonate: step 3/3. Functionally, catalyzes the reversible cyclization of carbamoyl aspartate to dihydroorotate. The chain is Dihydroorotase from Enterococcus faecalis (strain ATCC 700802 / V583).